The following is a 244-amino-acid chain: Ribosomal RNA small subunit methyltransferase NEP1 (244 aa).

The interval 1–34 is disordered; that stretch reads MAAPSDGFKPRERSGGEQAQDWDALPPKRPRLGA. The residue at position 2 (alanine 2) is an N-acetylalanine. 2 positions are modified to phosphoserine: serine 5 and serine 14. Residues threonine 176, glycine 201, glycine 206, and 219 to 224 each bind S-adenosyl-L-methionine; that span reads ISNYPL.

This sequence belongs to the class IV-like SAM-binding methyltransferase superfamily. RNA methyltransferase NEP1 family. Homodimer. Part of the small subunit (SSU) processome, composed of more than 70 proteins and the RNA chaperone small nucleolar RNA (snoRNA) U3.

The protein localises to the nucleus. It is found in the nucleolus. It carries out the reaction pseudouridine(1248) in human 18S rRNA + S-adenosyl-L-methionine = N(1)-methylpseudouridine(1248) in human 18S rRNA + S-adenosyl-L-homocysteine + H(+). Functionally, S-adenosyl-L-methionine-dependent pseudouridine N(1)-methyltransferase that methylates pseudouridine at position 1248 (Psi1248) in 18S rRNA. Involved the biosynthesis of the hypermodified N1-methyl-N3-(3-amino-3-carboxypropyl) pseudouridine (m1acp3-Psi) conserved in eukaryotic 18S rRNA. Is not able to methylate uridine at this position. Also has an essential role in 40S ribosomal subunit biogenesis independent on its methyltransferase activity, facilitating the incorporation of ribosomal protein S19 during the formation of pre-ribosomes. Part of the small subunit (SSU) processome, first precursor of the small eukaryotic ribosomal subunit. During the assembly of the SSU processome in the nucleolus, many ribosome biogenesis factors, an RNA chaperone and ribosomal proteins associate with the nascent pre-rRNA and work in concert to generate RNA folding, modifications, rearrangements and cleavage as well as targeted degradation of pre-ribosomal RNA by the RNA exosome. The chain is Ribosomal RNA small subunit methyltransferase NEP1 from Homo sapiens (Human).